We begin with the raw amino-acid sequence, 213 residues long: Orotate phosphoribosyltransferase (213 aa).

K26 provides a ligand contact to 5-phospho-alpha-D-ribose 1-diphosphate. 34 to 35 lines the orotate pocket; the sequence is FF. 5-phospho-alpha-D-ribose 1-diphosphate-binding positions include 72–73, R99, K100, K103, H105, and 124–132; these read YK and DDVITAGTA. Orotate contacts are provided by T128 and R156.

It belongs to the purine/pyrimidine phosphoribosyltransferase family. PyrE subfamily. Homodimer. Requires Mg(2+) as cofactor.

It carries out the reaction orotidine 5'-phosphate + diphosphate = orotate + 5-phospho-alpha-D-ribose 1-diphosphate. Its pathway is pyrimidine metabolism; UMP biosynthesis via de novo pathway; UMP from orotate: step 1/2. Its function is as follows. Catalyzes the transfer of a ribosyl phosphate group from 5-phosphoribose 1-diphosphate to orotate, leading to the formation of orotidine monophosphate (OMP). This is Orotate phosphoribosyltransferase from Haemophilus influenzae (strain 86-028NP).